An 843-amino-acid polypeptide reads, in one-letter code: Protein P (843 aa).

The segment at methionine 1–glutamine 177 is terminal protein domain (TP). The segment at glutamate 178–leucine 346 is spacer. Positions lysine 228 to serine 316 are disordered. Polar residues-rich tracts occupy residues threonine 262–phenylalanine 276, asparagine 286–glycine 299, and valine 307–serine 316. The tract at residues glutamate 347 to glutamine 690 is polymerase/reverse transcriptase domain (RT). Residues glutamate 357–isoleucine 600 form the Reverse transcriptase domain. Residues aspartate 429, aspartate 551, and aspartate 552 each contribute to the Mg(2+) site.

It belongs to the hepadnaviridae P protein family.

The enzyme catalyses DNA(n) + a 2'-deoxyribonucleoside 5'-triphosphate = DNA(n+1) + diphosphate. The catalysed reaction is Endonucleolytic cleavage to 5'-phosphomonoester.. Its activity is regulated as follows. Activated by host HSP70 and HSP40 in vitro to be able to bind the epsilon loop of the pgRNA. Because deletion of the RNase H region renders the protein partly chaperone-independent, the chaperones may be needed indirectly to relieve occlusion of the RNA-binding site by this domain. Inhibited by several reverse-transcriptase inhibitors: Lamivudine, Adefovir and Entecavir. In terms of biological role, multifunctional enzyme that converts the viral RNA genome into dsDNA in viral cytoplasmic capsids. This enzyme displays a DNA polymerase activity that can copy either DNA or RNA templates, and a ribonuclease H (RNase H) activity that cleaves the RNA strand of RNA-DNA heteroduplexes in a partially processive 3'- to 5'-endonucleasic mode. Neo-synthesized pregenomic RNA (pgRNA) are encapsidated together with the P protein, and reverse-transcribed inside the nucleocapsid. Initiation of reverse-transcription occurs first by binding the epsilon loop on the pgRNA genome, and is initiated by protein priming, thereby the 5'-end of (-)DNA is covalently linked to P protein. Partial (+)DNA is synthesized from the (-)DNA template and generates the relaxed circular DNA (RC-DNA) genome. After budding and infection, the RC-DNA migrates in the nucleus, and is converted into a plasmid-like covalently closed circular DNA (cccDNA). The activity of P protein does not seem to be necessary for cccDNA generation, and is presumably released from (+)DNA by host nuclear DNA repair machinery. In Homo sapiens (Human), this protein is Protein P.